Reading from the N-terminus, the 319-residue chain is Quinolinate synthase (319 aa).

Iminosuccinate-binding residues include His34 and Ser51. Cys96 contributes to the [4Fe-4S] cluster binding site. Iminosuccinate-binding positions include 122-124 and Ser139; that span reads YIN. Cys182 is a [4Fe-4S] cluster binding site. Iminosuccinate-binding positions include 208 to 210 and Thr225; that span reads HPE. Cys276 is a [4Fe-4S] cluster binding site.

This sequence belongs to the quinolinate synthase family. Type 2 subfamily. Requires [4Fe-4S] cluster as cofactor.

Its subcellular location is the cytoplasm. It carries out the reaction iminosuccinate + dihydroxyacetone phosphate = quinolinate + phosphate + 2 H2O + H(+). The protein operates within cofactor biosynthesis; NAD(+) biosynthesis; quinolinate from iminoaspartate: step 1/1. Functionally, catalyzes the condensation of iminoaspartate with dihydroxyacetone phosphate to form quinolinate. In Thermosynechococcus vestitus (strain NIES-2133 / IAM M-273 / BP-1), this protein is Quinolinate synthase.